The sequence spans 473 residues: Photosystem II CP43 reaction center protein (473 aa).

A propeptide spanning residues 1-14 (MKTLYSLRRFYPVE) is cleaved from the precursor. The residue at position 15 (Thr15) is an N-acetylthreonine. Thr15 is subject to Phosphothreonine. The next 5 membrane-spanning stretches (helical) occupy residues 69–93 (LFEV…PHLA), 134–155 (LLGP…KDRN), 178–200 (KALY…RKIT), 255–275 (KPFA…LSYS), and 291–312 (WFNN…ASQA). Glu367 is a [CaMn4O5] cluster binding site. The helical transmembrane segment at 447–471 (RARAAAAGFEKGIDRDFEPVLSMTP) threads the bilayer.

This sequence belongs to the PsbB/PsbC family. PsbC subfamily. In terms of assembly, PSII is composed of 1 copy each of membrane proteins PsbA, PsbB, PsbC, PsbD, PsbE, PsbF, PsbH, PsbI, PsbJ, PsbK, PsbL, PsbM, PsbT, PsbX, PsbY, PsbZ, Psb30/Ycf12, at least 3 peripheral proteins of the oxygen-evolving complex and a large number of cofactors. It forms dimeric complexes. The cofactor is Binds multiple chlorophylls and provides some of the ligands for the Ca-4Mn-5O cluster of the oxygen-evolving complex. It may also provide a ligand for a Cl- that is required for oxygen evolution. PSII binds additional chlorophylls, carotenoids and specific lipids..

Its subcellular location is the plastid. The protein localises to the chloroplast thylakoid membrane. One of the components of the core complex of photosystem II (PSII). It binds chlorophyll and helps catalyze the primary light-induced photochemical processes of PSII. PSII is a light-driven water:plastoquinone oxidoreductase, using light energy to abstract electrons from H(2)O, generating O(2) and a proton gradient subsequently used for ATP formation. The polypeptide is Photosystem II CP43 reaction center protein (Daucus carota (Wild carrot)).